The chain runs to 633 residues: ATP-dependent clpX-like chaperone, mitochondrial (633 aa).

The N-terminal 56 residues, 1–56 (MPSCGACTCGAAAVRLITSSLASAQRGISGGRIHMSVLGRLGTFETQILQRAPLRS), are a transit peptide targeting the mitochondrion. The disordered stretch occupies residues 68–100 (DGISKDGSGDGNKKSASEGSSKKSGSGNSGKGG). Residues 69 to 83 (GISKDGSGDGNKKSA) are compositionally biased toward basic and acidic residues. Over residues 84 to 93 (SEGSSKKSGS) the composition is skewed to low complexity. Positions 93–146 (SGNSGKGGNQLRCPKCGDLCTHVETFVSSTRFVKCEKCHHFFVVLSEADSKKSI) constitute a ClpX-type ZB domain. Zn(2+)-binding residues include Cys105, Cys108, Cys127, and Cys130. 294 to 301 (PTGSGKTL) is a binding site for ATP. The residue at position 437 (Lys437) is an N6-acetyllysine. The segment covering 598-610 (KEPGYIRAPTKES) has biased composition (basic and acidic residues). A disordered region spans residues 598–633 (KEPGYIRAPTKESSEEEYDSGVEEEGWPRQADAANS). Positions 611–622 (SEEEYDSGVEEE) are enriched in acidic residues. Ser617 is modified (phosphoserine).

The protein belongs to the ClpX chaperone family. Homohexamer that forms a ring structure; this hexamerization requires ATP binding. Component of the ClpXP complex formed by the assembly of two CLPP heptameric rings with two CLPX hexameric rings, giving rise to a symmetrical structure with two central CLPP rings flanked by a CLPX ring at either end of the complex. Interacts with TFAM. Higher expression in skeletal muscle and heart and to a lesser extent in liver, brain, placenta, lung, kidney and pancreas.

Its subcellular location is the mitochondrion. The protein localises to the mitochondrion matrix. The protein resides in the mitochondrion nucleoid. The enzyme catalyses ATP + H2O = ADP + phosphate + H(+). ATP-dependent chaperone that functions as an unfoldase. As part of the ClpXP protease complex, it recognizes specific protein substrates, unfolds them using energy derived from ATP hydrolysis, and then translocates them to the proteolytic subunit (CLPP) of the ClpXP complex for degradation. Thanks to its chaperone activity, it also functions in the incorporation of the pyridoxal phosphate cofactor into 5-aminolevulinate synthase, thereby activating 5-aminolevulinate (ALA) synthesis, the first step in heme biosynthesis. This chaperone is also involved in the control of mtDNA nucleoid distribution, by regulating mitochondrial transcription factor A (TFAM) activity. This is ATP-dependent clpX-like chaperone, mitochondrial from Homo sapiens (Human).